The following is a 505-amino-acid chain: Actin nucleation-promoting factor WASL (505 aa).

The residue at position 2 (Ser2) is an N-acetylserine. The WH1 domain occupies 34 to 141 (LGKKCVTMSS…KAVTDLLGRR (108 aa)). Disordered regions lie at residues 138–163 (LGRR…ATVD) and 185–205 (TKEK…DIGT). Residues 186–198 (KEKKKGKAKKKRL) show a composition bias toward basic residues. A CRIB domain is found at 203 to 216 (IGTPSNFQHIGHVG). Residue Ser242 is modified to Phosphoserine; by TNK2. A Phosphotyrosine; by FAK1 and TNK2 modification is found at Tyr256. 3 disordered regions span residues 266–406 (EAVK…AGSK), 449–468 (SVTD…SGIV), and 477–505 (KRSK…EWED). Pro residues-rich tracts occupy residues 276-349 (APPP…PLPA), 356-365 (SGPPPPPPPL), and 372-391 (APPP…PPGL). At Arg307 the chain carries Omega-N-methylarginine. WH2 domains follow at residues 405–422 (SKAA…LKKV) and 433–450 (GRDA…LKSV). Ser484 and Ser485 each carry phosphoserine. The segment covering 486–505 (DEDEDEDDDEDFEDDDEWED) has biased composition (acidic residues).

As to quaternary structure, binds actin and the Arp2/3 complex. Interacts with CDC42. Interacts with FCHSD1. Interacts with FCHSD2. Binds to SH3 domains of GRB2. Interacts with the C-terminal SH3 domain of DNMBP. Interacts with SNX9. Interacts with the WW domains of PRPF40A/FBP11. Interacts with PTK2/FAK1. Interacts with PACSIN1, PACSIN2 and PACSIN3. Interacts with NOSTRIN. Binds to TNK2. Interacts with SNX33. Interacts with NONO (via second RRM domain); the interaction is direct. Component of a multiprotein complex with NONO and SFPQ; associates with the complex via direct interaction with NONO. In terms of processing, phosphorylation at Ser-242, Tyr-256, Ser-484 and Ser-485 enhances actin polymerization activity.

It localises to the cytoplasm. The protein localises to the cytoskeleton. The protein resides in the nucleus. In terms of biological role, regulates actin polymerization by stimulating the actin-nucleating activity of the Arp2/3 complex. Involved in various processes, such as mitosis and cytokinesis, via its role in the regulation of actin polymerization. Together with CDC42, involved in the extension and maintenance of the formation of thin, actin-rich surface projections called filopodia. In addition to its role in the cytoplasm, also plays a role in the nucleus by regulating gene transcription, probably by promoting nuclear actin polymerization. Binds to HSF1/HSTF1 and forms a complex on heat shock promoter elements (HSE) that negatively regulates HSP90 expression. Plays a role in dendrite spine morphogenesis. The polypeptide is Actin nucleation-promoting factor WASL (WASL) (Bos taurus (Bovine)).